A 111-amino-acid polypeptide reads, in one-letter code: Dormancy-associated protein 1 (111 aa).

The interval 30–60 (KDDGASNQLMRSTSIPTTPTTPVTPTTPSSA) is disordered. The segment covering 41-59 (STSIPTTPTTPVTPTTPSS) has biased composition (low complexity).

The protein belongs to the DRM1/ARP family. Expressed in axilary buds and in non-growing stems and roots. Detected in sepals, stamens and carpels, but barely detected in petals or leaflets.

The protein is Dormancy-associated protein 1 of Pisum sativum (Garden pea).